The following is a 94-amino-acid chain: Co-chaperonin GroES (94 aa).

Belongs to the GroES chaperonin family. As to quaternary structure, heptamer of 7 subunits arranged in a ring. Interacts with the chaperonin GroEL.

The protein resides in the cytoplasm. Functionally, together with the chaperonin GroEL, plays an essential role in assisting protein folding. The GroEL-GroES system forms a nano-cage that allows encapsulation of the non-native substrate proteins and provides a physical environment optimized to promote and accelerate protein folding. GroES binds to the apical surface of the GroEL ring, thereby capping the opening of the GroEL channel. This chain is Co-chaperonin GroES, found in Exiguobacterium sp. (strain ATCC BAA-1283 / AT1b).